The sequence spans 673 residues: Kinesin-like protein KIFC1 (673 aa).

Residues serine 6, serine 26, serine 31, and serine 33 each carry the phosphoserine modification. 2 disordered regions span residues 23–94 and 109–136; these read KAPS…TGPR and VPAV…KRPA. The span at 60-86 shows a compositional bias: polar residues; sequence TKITTSHPRVPSLTTVPQTQGQTTAQK. Residues 142 to 306 adopt a coiled-coil conformation; the sequence is QLCDLNAELK…RRRLHNQLQE (165 aa). The Kinesin motor domain occupies 310-663; sequence NIRVFCRVRP…LRFASKVNQC (354 aa). Positions 325–372 are disordered; that stretch reads PTPPPGLLLFPSGPGGPSDPPTRLSLSRSDERRGTLSGAPAPPTRHDF. Threonine 359 bears the Phosphothreonine mark. ATP is bound at residue 410 to 417; it reads GQTGSGKT.

It belongs to the TRAFAC class myosin-kinesin ATPase superfamily. Kinesin family. NCD subfamily. As to quaternary structure, binds NUBP1 and NUBP2. Interacts with PPP1R42.

It localises to the nucleus. It is found in the cytoplasm. The protein localises to the cytoskeleton. The protein resides in the microtubule organizing center. Its subcellular location is the centrosome. It localises to the spindle. It is found in the early endosome. Minus end-directed microtubule-dependent motor required for bipolar spindle formation. May contribute to movement of early endocytic vesicles. Regulates cilium formation and structure. The polypeptide is Kinesin-like protein KIFC1 (KIFC1) (Homo sapiens (Human)).